A 288-amino-acid chain; its full sequence is POU domain class 2-associating factor 2 (288 aa).

In terms of domain architecture, OCA spans 10–32; it reads KRVYQGVRVKHTVKDLLAEKRSG. 2 disordered regions span residues 24 to 52 and 247 to 274; these read DLLAEKRSGQTSNSRLNGSVSSSQSPFVQ and PPKVGPLSPDEEADTGSLHDPSPWVKED. Over residues 35-48 the composition is skewed to low complexity; it reads SNSRLNGSVSSSQS.

The protein belongs to the POU2AF family. As to quaternary structure, interacts with POU2F3 (via the POU domain) in a DNA-dependent manner; this interaction recruits POU2AF2 to chromatin and increases POU2F3 transactivation activity. As to expression, expressed in tuft cells of colon mucosa, as well as in small intestine and thymus.

Its subcellular location is the cytoplasm. The protein localises to the cytosol. It localises to the nucleus. Its function is as follows. Transcriptional coactivator of POU2F3. This complex drives the development of tuft cells, a rare chemosensory cells that coordinate immune and neural functions within mucosal epithelial tissues. The protein is POU domain class 2-associating factor 2 of Homo sapiens (Human).